The sequence spans 34 residues: Photosystem II reaction center protein M (34 aa).

The chain crosses the membrane as a helical span at residues 5–25 (ILAFIATALFILVPTAFLLII).

The protein belongs to the PsbM family. As to quaternary structure, PSII is composed of 1 copy each of membrane proteins PsbA, PsbB, PsbC, PsbD, PsbE, PsbF, PsbH, PsbI, PsbJ, PsbK, PsbL, PsbM, PsbT, PsbX, PsbY, PsbZ, Psb30/Ycf12, at least 3 peripheral proteins of the oxygen-evolving complex and a large number of cofactors. It forms dimeric complexes.

It localises to the plastid. It is found in the chloroplast thylakoid membrane. In terms of biological role, one of the components of the core complex of photosystem II (PSII). PSII is a light-driven water:plastoquinone oxidoreductase that uses light energy to abstract electrons from H(2)O, generating O(2) and a proton gradient subsequently used for ATP formation. It consists of a core antenna complex that captures photons, and an electron transfer chain that converts photonic excitation into a charge separation. This subunit is found at the monomer-monomer interface. The sequence is that of Photosystem II reaction center protein M from Buxus microphylla (Littleleaf boxwood).